A 128-amino-acid chain; its full sequence is Protein Wnt-10 (128 aa).

Disulfide bonds link Cys3/Cys17, Cys5/Cys12, Cys74/Cys105, Cys90/Cys100, and Cys127/Cys128. The O-palmitoleoyl serine; by PORCN moiety is linked to residue Ser9. N-linked (GlcNAc...) asparagine glycosylation occurs at Asn91.

This sequence belongs to the Wnt family. Palmitoleoylation is required for efficient binding to frizzled receptors. Depalmitoleoylation leads to Wnt signaling pathway inhibition. In embryo, in dorsal hindbrain; in adults, in brain.

It localises to the secreted. The protein localises to the extracellular space. It is found in the extracellular matrix. In terms of biological role, ligand for members of the frizzled family of seven transmembrane receptors. Probable developmental protein. May be a signaling molecule which affects the development of discrete regions of tissues. Is likely to signal over only few cell diameters. The protein is Protein Wnt-10 (wnt10) of Xenopus laevis (African clawed frog).